The following is a 283-amino-acid chain: Lipoyl synthase (283 aa).

The [4Fe-4S] cluster site is built by Cys-35, Cys-40, Cys-46, Cys-61, Cys-65, Cys-68, and Ser-273. A Radical SAM core domain is found at 47 to 262 (FRSRQATFLI…RERALAMGFK (216 aa)).

This sequence belongs to the radical SAM superfamily. Lipoyl synthase family. The cofactor is [4Fe-4S] cluster.

It is found in the cytoplasm. The enzyme catalyses [[Fe-S] cluster scaffold protein carrying a second [4Fe-4S](2+) cluster] + N(6)-octanoyl-L-lysyl-[protein] + 2 oxidized [2Fe-2S]-[ferredoxin] + 2 S-adenosyl-L-methionine + 4 H(+) = [[Fe-S] cluster scaffold protein] + N(6)-[(R)-dihydrolipoyl]-L-lysyl-[protein] + 4 Fe(3+) + 2 hydrogen sulfide + 2 5'-deoxyadenosine + 2 L-methionine + 2 reduced [2Fe-2S]-[ferredoxin]. Its pathway is protein modification; protein lipoylation via endogenous pathway; protein N(6)-(lipoyl)lysine from octanoyl-[acyl-carrier-protein]: step 2/2. Its function is as follows. Catalyzes the radical-mediated insertion of two sulfur atoms into the C-6 and C-8 positions of the octanoyl moiety bound to the lipoyl domains of lipoate-dependent enzymes, thereby converting the octanoylated domains into lipoylated derivatives. This chain is Lipoyl synthase, found in Geotalea uraniireducens (strain Rf4) (Geobacter uraniireducens).